We begin with the raw amino-acid sequence, 679 residues long: Protein CASP (679 aa).

The Cytoplasmic segment spans residues 1-614; the sequence is MDTSVYSHAL…VILQNKMTRM (614 aa). Coiled-coil stretches lie at residues 14–90 and 178–341; these read AKAD…EKVL and RNWK…NYSD. Position 364 is a phosphoserine (serine 364). A coiled-coil region spans residues 385 to 444; that stretch reads ANKKLQATLAEYRSKSTAQEEERNELKKSVDQLKQQIATLKEANEKLETDLEKVENVSPH. Serine 450 and serine 453 each carry phosphoserine. Residues 492–540 adopt a coiled-coil conformation; it reads IVTKQRDRFRSRNMDLEKQLRQGNSEKGKLKLEISKLKGDNTKLYERIR. Serine 555 is modified (phosphoserine). A helical; Anchor for type IV membrane protein membrane pass occupies residues 615–635; the sequence is VFLFYCIGLHGLVFMMSMYVI. At 636-679 the chain is on the lumenal side; it reads NISGYMTPEVGIVQSAKSSSNLNGGLGGAEKVAAGVGSVHGINR.

The protein belongs to the CASP family.

It is found in the golgi apparatus membrane. In terms of biological role, may be involved in intra-Golgi transport. The protein is Protein CASP (COY1) of Saccharomyces cerevisiae (strain ATCC 204508 / S288c) (Baker's yeast).